We begin with the raw amino-acid sequence, 163 residues long: IQSTSMDQGILTEDSMNSFIRTLIQAGIWKNKVPKQTARTKDGTQTTVKKTEAEADAMVSKDTRLSFQPIVSVDAELLRQQRRFSSPRVLLSENTPLEPPPLYLTEEPTVLNRTSRRKREGKSHRGEYSVCDSESRWVTDKSSAVDIRGHQVTVLGEIRMGPS.

Residues 1-3 (IQS) form the signal peptide. Residues 4-119 (TSMDQGILTE…VLNRTSRRKR (116 aa)) constitute a propeptide that is removed on maturation. N-linked (GlcNAc...) asparagine glycosylation occurs at Asn-112.

Belongs to the NGF-beta family.

It is found in the secreted. Functionally, seems to promote the survival of visceral and proprioceptive sensory neurons. The polypeptide is Neurotrophin-3 (NTF3) (Eryx conicus (Rough-scaled sand boa)).